The chain runs to 811 residues: TLR4 interactor with leucine rich repeats (811 aa).

A signal peptide spans 1 to 25 (MEAARALRLLLVVCGCLALPPLAEP). The LRRNT domain occupies 26 to 57 (VCPERCDCQHPQHLLCTNRGLRVVPKTSSLPS). Residues 26-696 (VCPERCDCQH…AGSRGGVDYQ (671 aa)) are Extracellular-facing. LRR repeat units follow at residues 61-81 (VLTY…DFHR), 84-105 (QLRR…TFEK), 108-129 (RLEE…TLAP), 132-153 (KLRI…SFEG), 156-177 (SLVK…VFAP), 180-201 (NLLY…AFAQ), 204-223 (KLRF…RHAA), 230-251 (SLSS…IFQH), 254-275 (RLGL…AFWG), 278-299 (ALRE…LLEP), 302-323 (SLEA…TFGH), and 326-347 (RLRE…IFAA). N-linked (GlcNAc...) asparagine glycosylation occurs at Asn-73. N-linked (GlcNAc...) asparagine glycosylation is present at Asn-209. An LRRCT domain is found at 359–416 (NGWTCDCRLRGLKRWMGDWHSQGRLLTVFVQCRHPPALRGKYLDYLDDQQLQNGSCAD). Residues 484 to 549 (LSRRGPGLQQ…PSPAGDPWQR (66 aa)) are disordered. Composition is skewed to low complexity over residues 492 to 508 (QQPS…APQS) and 530 to 544 (PTPT…SPAG). N-linked (GlcNAc...) asparagine glycosylation is present at Asn-589. The helical transmembrane segment at 697 to 717 (LLTLALLTVNALLVLLALAAW) threads the bilayer. The Cytoplasmic segment spans residues 718–811 (ASRWLRRKLR…EDRLLQRFAD (94 aa)). Ser-798 carries the phosphoserine modification.

In terms of assembly, belongs to the lipopolysaccharide (LPS) receptor, a multi-protein complex containing at least CD14, MD-2 and TLR4. Interacts with TLR4; this interaction is greatly enhanced by LPS stimulation. Interacts with LPS. Post-translationally, N-glycolysaled. As to expression, highly expressed in the brain, ovary, small intestine and spleen.

It localises to the membrane. Functionally, component of the TLR4 signaling complex. Mediates the innate immune response to bacterial lipopolysaccharide (LPS) leading to cytokine secretion. In Homo sapiens (Human), this protein is TLR4 interactor with leucine rich repeats (TRIL).